The chain runs to 219 residues: NAD(P)H-quinone oxidoreductase subunit I (219 aa).

2 4Fe-4S ferredoxin-type domains span residues 55–84 (GRIHYEFDKCIACEVCVRVCPINLPVVDWV) and 95–124 (RNYSIDFGVCIFCGNCVEYCPTNCLSMTEE). [4Fe-4S] cluster contacts are provided by cysteine 64, cysteine 67, cysteine 70, cysteine 74, cysteine 104, cysteine 107, cysteine 110, and cysteine 114.

The protein belongs to the complex I 23 kDa subunit family. In terms of assembly, NDH-1 is composed of at least 11 different subunits. The cofactor is [4Fe-4S] cluster.

Its subcellular location is the cellular thylakoid membrane. The catalysed reaction is a plastoquinone + NADH + (n+1) H(+)(in) = a plastoquinol + NAD(+) + n H(+)(out). It carries out the reaction a plastoquinone + NADPH + (n+1) H(+)(in) = a plastoquinol + NADP(+) + n H(+)(out). Functionally, NDH-1 shuttles electrons from an unknown electron donor, via FMN and iron-sulfur (Fe-S) centers, to quinones in the respiratory and/or the photosynthetic chain. The immediate electron acceptor for the enzyme in this species is believed to be plastoquinone. Couples the redox reaction to proton translocation, and thus conserves the redox energy in a proton gradient. The protein is NAD(P)H-quinone oxidoreductase subunit I of Prochlorococcus marinus (strain SARG / CCMP1375 / SS120).